A 421-amino-acid chain; its full sequence is Serine--tRNA ligase (421 aa).

Residue 230–232 (TAE) coordinates L-serine. 259–261 (RRE) contacts ATP. An L-serine-binding site is contributed by glutamate 282. Position 346–349 (346–349 (EISS)) interacts with ATP. Position 380 (serine 380) interacts with L-serine.

Belongs to the class-II aminoacyl-tRNA synthetase family. Type-1 seryl-tRNA synthetase subfamily. In terms of assembly, homodimer. The tRNA molecule binds across the dimer.

It is found in the cytoplasm. The enzyme catalyses tRNA(Ser) + L-serine + ATP = L-seryl-tRNA(Ser) + AMP + diphosphate + H(+). It carries out the reaction tRNA(Sec) + L-serine + ATP = L-seryl-tRNA(Sec) + AMP + diphosphate + H(+). Its pathway is aminoacyl-tRNA biosynthesis; selenocysteinyl-tRNA(Sec) biosynthesis; L-seryl-tRNA(Sec) from L-serine and tRNA(Sec): step 1/1. Functionally, catalyzes the attachment of serine to tRNA(Ser). Is also able to aminoacylate tRNA(Sec) with serine, to form the misacylated tRNA L-seryl-tRNA(Sec), which will be further converted into selenocysteinyl-tRNA(Sec). The chain is Serine--tRNA ligase from Methanosarcina acetivorans (strain ATCC 35395 / DSM 2834 / JCM 12185 / C2A).